Here is a 145-residue protein sequence, read N- to C-terminus: D-aminoacyl-tRNA deacylase (145 aa).

Residues 137-138 (GP) carry the Gly-cisPro motif, important for rejection of L-amino acids motif.

The protein belongs to the DTD family. In terms of assembly, homodimer.

The protein localises to the cytoplasm. It catalyses the reaction glycyl-tRNA(Ala) + H2O = tRNA(Ala) + glycine + H(+). It carries out the reaction a D-aminoacyl-tRNA + H2O = a tRNA + a D-alpha-amino acid + H(+). In terms of biological role, an aminoacyl-tRNA editing enzyme that deacylates mischarged D-aminoacyl-tRNAs. Also deacylates mischarged glycyl-tRNA(Ala), protecting cells against glycine mischarging by AlaRS. Acts via tRNA-based rather than protein-based catalysis; rejects L-amino acids rather than detecting D-amino acids in the active site. By recycling D-aminoacyl-tRNA to D-amino acids and free tRNA molecules, this enzyme counteracts the toxicity associated with the formation of D-aminoacyl-tRNA entities in vivo and helps enforce protein L-homochirality. This chain is D-aminoacyl-tRNA deacylase, found in Chromohalobacter salexigens (strain ATCC BAA-138 / DSM 3043 / CIP 106854 / NCIMB 13768 / 1H11).